A 698-amino-acid polypeptide reads, in one-letter code: Elongation factor G (698 aa).

One can recognise a tr-type G domain in the interval 8-290 (ERYRNIGISA…AVIELLPSPV (283 aa)). GTP is bound by residues 17 to 24 (AHIDAGKT), 88 to 92 (DTPGH), and 142 to 145 (NKMD).

Belongs to the TRAFAC class translation factor GTPase superfamily. Classic translation factor GTPase family. EF-G/EF-2 subfamily.

Its subcellular location is the cytoplasm. Its function is as follows. Catalyzes the GTP-dependent ribosomal translocation step during translation elongation. During this step, the ribosome changes from the pre-translocational (PRE) to the post-translocational (POST) state as the newly formed A-site-bound peptidyl-tRNA and P-site-bound deacylated tRNA move to the P and E sites, respectively. Catalyzes the coordinated movement of the two tRNA molecules, the mRNA and conformational changes in the ribosome. The polypeptide is Elongation factor G (Aromatoleum aromaticum (strain DSM 19018 / LMG 30748 / EbN1) (Azoarcus sp. (strain EbN1))).